The sequence spans 37 residues: Large ribosomal subunit protein bL36B (37 aa).

Belongs to the bacterial ribosomal protein bL36 family.

This Aeromonas salmonicida (strain A449) protein is Large ribosomal subunit protein bL36B.